We begin with the raw amino-acid sequence, 642 residues long: Polyglycine hydrolase (642 aa).

The first 23 residues, 1–23 (MYTSRLLLSNLASCLSLATLVAS), serve as a signal peptide directing secretion. Asn-37, Asn-100, Asn-159, and Asn-341 each carry an N-linked (GlcNAc...) asparagine glycan. A disulfide bridge connects residues Cys-149 and Cys-183. Ser-370 is an active-site residue. N-linked (GlcNAc...) asparagine glycans are attached at residues Asn-390, Asn-407, Asn-444, Asn-487, and Asn-494.

It belongs to the peptidase S12 family.

The protein resides in the secreted. The catalysed reaction is a glycyl-glycyl-[protein] + H2O = N-terminal glycyl-[protein] + [protein]-C-terminal glycine. Not inhibited by phenylmethylsulfonyl fluoride (PMSF; serine peptidase class S1 inhibitor), clavulanic acid (beta-lactamase inhibitor) or ampicillin (penicillin-binding protein (PBP) inhibitor). Serine-type endopeptidase that cleaves Gly-Gly bonds in the polyglycine linker of host plant class IV chitinases to disrupt their chitin-binding, and thereby plays a role in lowering the defense responses of the host to the fungus. Degrades Z.mays Endochitinase A (CHIA). Degrades Z.mays Endochitinase B (CHIB). Has no activity on Z.mays CHIA following CHIA cleavage by fungalysin. The protein is Polyglycine hydrolase of Epicoccum sorghinum (Endophyte fungus).